A 491-amino-acid chain; its full sequence is GTPase Der (491 aa).

2 consecutive EngA-type G domains span residues 3 to 166 (PVVA…AEAM) and 200 to 373 (IKLA…DSAT). GTP is bound by residues 9–16 (GRPNVGKS), 56–60 (DTGGI), 118–121 (NKVD), 206–213 (GKPNVGKS), 253–257 (DTAGV), and 318–321 (NKWD). Positions 374–458 (RRVSTSMLTR…PIQIRFQEGD (85 aa)) constitute a KH-like domain. The tract at residues 472-491 (QERRRKRALSHINDRKTKGE) is disordered.

This sequence belongs to the TRAFAC class TrmE-Era-EngA-EngB-Septin-like GTPase superfamily. EngA (Der) GTPase family. In terms of assembly, associates with the 50S ribosomal subunit.

In terms of biological role, GTPase that plays an essential role in the late steps of ribosome biogenesis. This chain is GTPase Der, found in Shewanella denitrificans (strain OS217 / ATCC BAA-1090 / DSM 15013).